A 216-amino-acid polypeptide reads, in one-letter code: ATP-dependent dethiobiotin synthetase BioD (216 aa).

12–17 (NVGKTF) contacts ATP. Thr16 contributes to the Mg(2+) binding site. Residue Lys36 is part of the active site. Ser40 is a binding site for substrate. ATP-binding positions include Asp53, 110-113 (EGAG), and 170-171 (NQ). Mg(2+) contacts are provided by Asp53 and Glu110.

It belongs to the dethiobiotin synthetase family. In terms of assembly, homodimer. The cofactor is Mg(2+).

Its subcellular location is the cytoplasm. The catalysed reaction is (7R,8S)-7,8-diammoniononanoate + CO2 + ATP = (4R,5S)-dethiobiotin + ADP + phosphate + 3 H(+). It functions in the pathway cofactor biosynthesis; biotin biosynthesis; biotin from 7,8-diaminononanoate: step 1/2. Functionally, catalyzes a mechanistically unusual reaction, the ATP-dependent insertion of CO2 between the N7 and N8 nitrogen atoms of 7,8-diaminopelargonic acid (DAPA, also called 7,8-diammoniononanoate) to form a ureido ring. This is ATP-dependent dethiobiotin synthetase BioD from Vesicomyosocius okutanii subsp. Calyptogena okutanii (strain HA).